We begin with the raw amino-acid sequence, 342 residues long: 4-hydroxy-3-methylbut-2-enyl diphosphate reductase (342 aa).

Position 47 (cysteine 47) interacts with [4Fe-4S] cluster. Residues histidine 78 and histidine 111 each coordinate (2E)-4-hydroxy-3-methylbut-2-enyl diphosphate. The dimethylallyl diphosphate site is built by histidine 78 and histidine 111. Isopentenyl diphosphate is bound by residues histidine 78 and histidine 111. A [4Fe-4S] cluster-binding site is contributed by cysteine 133. (2E)-4-hydroxy-3-methylbut-2-enyl diphosphate is bound at residue histidine 161. Position 161 (histidine 161) interacts with dimethylallyl diphosphate. Histidine 161 contributes to the isopentenyl diphosphate binding site. The active-site Proton donor is the glutamate 163. Threonine 201 is a (2E)-4-hydroxy-3-methylbut-2-enyl diphosphate binding site. Cysteine 231 contributes to the [4Fe-4S] cluster binding site. 4 residues coordinate (2E)-4-hydroxy-3-methylbut-2-enyl diphosphate: serine 259, serine 260, asparagine 261, and serine 303. Dimethylallyl diphosphate-binding residues include serine 259, serine 260, asparagine 261, and serine 303. Isopentenyl diphosphate contacts are provided by serine 259, serine 260, asparagine 261, and serine 303.

It belongs to the IspH family. It depends on [4Fe-4S] cluster as a cofactor.

The catalysed reaction is isopentenyl diphosphate + 2 oxidized [2Fe-2S]-[ferredoxin] + H2O = (2E)-4-hydroxy-3-methylbut-2-enyl diphosphate + 2 reduced [2Fe-2S]-[ferredoxin] + 2 H(+). The enzyme catalyses dimethylallyl diphosphate + 2 oxidized [2Fe-2S]-[ferredoxin] + H2O = (2E)-4-hydroxy-3-methylbut-2-enyl diphosphate + 2 reduced [2Fe-2S]-[ferredoxin] + 2 H(+). It functions in the pathway isoprenoid biosynthesis; dimethylallyl diphosphate biosynthesis; dimethylallyl diphosphate from (2E)-4-hydroxy-3-methylbutenyl diphosphate: step 1/1. It participates in isoprenoid biosynthesis; isopentenyl diphosphate biosynthesis via DXP pathway; isopentenyl diphosphate from 1-deoxy-D-xylulose 5-phosphate: step 6/6. In terms of biological role, catalyzes the conversion of 1-hydroxy-2-methyl-2-(E)-butenyl 4-diphosphate (HMBPP) into a mixture of isopentenyl diphosphate (IPP) and dimethylallyl diphosphate (DMAPP). Acts in the terminal step of the DOXP/MEP pathway for isoprenoid precursor biosynthesis. This is 4-hydroxy-3-methylbut-2-enyl diphosphate reductase from Anaplasma marginale (strain Florida).